The following is an 87-amino-acid chain: Small ribosomal subunit protein bS20 (87 aa).

A disordered region spans residues methionine 1–serine 26.

The protein belongs to the bacterial ribosomal protein bS20 family.

Functionally, binds directly to 16S ribosomal RNA. The protein is Small ribosomal subunit protein bS20 of Escherichia coli O17:K52:H18 (strain UMN026 / ExPEC).